Here is a 179-residue protein sequence, read N- to C-terminus: Cell division protein ZapC (179 aa).

It belongs to the ZapC family. In terms of assembly, interacts directly with FtsZ.

It is found in the cytoplasm. Contributes to the efficiency of the cell division process by stabilizing the polymeric form of the cell division protein FtsZ. Acts by promoting interactions between FtsZ protofilaments and suppressing the GTPase activity of FtsZ. In Aliivibrio salmonicida (strain LFI1238) (Vibrio salmonicida (strain LFI1238)), this protein is Cell division protein ZapC.